The sequence spans 274 residues: Diaminopimelate epimerase (274 aa).

Residues N11, Q44, and N64 each coordinate substrate. C73 (proton donor) is an active-site residue. Residues 74 to 75 (GN), N157, N190, and 208 to 209 (ER) contribute to the substrate site. The Proton acceptor role is filled by C217. 218–219 (GS) provides a ligand contact to substrate.

It belongs to the diaminopimelate epimerase family. As to quaternary structure, homodimer.

The protein localises to the cytoplasm. It carries out the reaction (2S,6S)-2,6-diaminopimelate = meso-2,6-diaminopimelate. It participates in amino-acid biosynthesis; L-lysine biosynthesis via DAP pathway; DL-2,6-diaminopimelate from LL-2,6-diaminopimelate: step 1/1. Functionally, catalyzes the stereoinversion of LL-2,6-diaminopimelate (L,L-DAP) to meso-diaminopimelate (meso-DAP), a precursor of L-lysine and an essential component of the bacterial peptidoglycan. The protein is Diaminopimelate epimerase of Yersinia enterocolitica serotype O:8 / biotype 1B (strain NCTC 13174 / 8081).